Here is a 325-residue protein sequence, read N- to C-terminus: SAM pointed domain-containing Ets transcription factor (325 aa).

Disordered stretches follow at residues 27–50 (GTEK…PPAT) and 79–100 (ARAG…SQAS). One can recognise a PNT domain in the interval 119-203 (EVLKDIETAC…AHLDIWKSAA (85 aa)). The segment at residues 239–322 (IHLWQFLKEL…ISQRLVYQFV (84 aa)) is a DNA-binding region (ETS).

This sequence belongs to the ETS family. As to quaternary structure, interacts with the DNA-binding domain of the androgen receptor. Interacts with NKX3-1. As to expression, expressed in the accessory glands of sex organs including the prostate, seminal vesicle, coagulating gland in males, the oviduct in females, and in intestines. Expression is epithelial-specific.

It is found in the nucleus. Its function is as follows. May function as an androgen-independent transactivator of the prostate-specific antigen (PSA) promoter. Binds to 5'-GGAT-3' DNA sequences. May play a role in the regulation of the prostate gland and/or prostate cancer development. Acts as a transcriptional activator for SERPINB5 promoter. In Mus musculus (Mouse), this protein is SAM pointed domain-containing Ets transcription factor (Spdef).